Consider the following 347-residue polypeptide: Eukaryotic translation initiation factor 3 subunit H (347 aa).

The MPN domain maps to 6-149; sequence VCIDSSVALK…PSSTGPQGHT (144 aa). Positions 136–155 are disordered; that stretch reads SDTDPSSTGPQGHTTTTPSG. A compositionally biased stretch (polar residues) spans 138–155; sequence TDPSSTGPQGHTTTTPSG.

This sequence belongs to the eIF-3 subunit H family. In terms of assembly, component of the eukaryotic translation initiation factor 3 (eIF-3) complex.

The protein localises to the cytoplasm. In terms of biological role, component of the eukaryotic translation initiation factor 3 (eIF-3) complex, which is involved in protein synthesis of a specialized repertoire of mRNAs and, together with other initiation factors, stimulates binding of mRNA and methionyl-tRNAi to the 40S ribosome. The eIF-3 complex specifically targets and initiates translation of a subset of mRNAs involved in cell proliferation. The protein is Eukaryotic translation initiation factor 3 subunit H of Yarrowia lipolytica (strain CLIB 122 / E 150) (Yeast).